The chain runs to 163 residues: MASTCSFDIVSDFEWQELVNAIDQANREIKARYDLKDTKTEIKLDPTEITISTDSEFTLDAVHNVLQTKAVKRKLSLKIFDYGIIESASGNRVRQAIKLQKGIDTELAKKISKLIRTDYKKVQASIQGEVVRVSSKSKDDLQQVMQDLKQEDWPVALQFTNYR.

This sequence belongs to the YajQ family.

Nucleotide-binding protein. This Acaryochloris marina (strain MBIC 11017) protein is Nucleotide-binding protein AM1_1863.